The sequence spans 105 residues: MAKGNSPLERPSLASLDQKLAFAKRCSHEGVLAGAKAAVVASVASAIPTLASVRMLPWARANLNHTAQALIISTATAAAYFIVADKTVLATARKNSFNQPSNSEA.

A helical transmembrane segment spans residues 66–83 (TAQALIISTATAAAYFIV).

It localises to the membrane. This is Early nodulin-93 from Glycine max (Soybean).